We begin with the raw amino-acid sequence, 588 residues long: Aspartate--tRNA ligase (588 aa).

Glu-172 lines the L-aspartate pocket. An aspartate region spans residues 196 to 199; that stretch reads QLFK. Residue Arg-218 participates in L-aspartate binding. ATP is bound by residues 218 to 220 and Gln-227; that span reads RDE. His-449 is an L-aspartate binding site. Glu-483 is a binding site for ATP. Arg-490 lines the L-aspartate pocket. 535 to 538 is an ATP binding site; sequence GLDR.

The protein belongs to the class-II aminoacyl-tRNA synthetase family. Type 1 subfamily. Homodimer.

It is found in the cytoplasm. It carries out the reaction tRNA(Asp) + L-aspartate + ATP = L-aspartyl-tRNA(Asp) + AMP + diphosphate. Catalyzes the attachment of L-aspartate to tRNA(Asp) in a two-step reaction: L-aspartate is first activated by ATP to form Asp-AMP and then transferred to the acceptor end of tRNA(Asp). The polypeptide is Aspartate--tRNA ligase (Haemophilus influenzae (strain PittEE)).